The chain runs to 94 residues: MTKSELIERLCAEQTHLSAKEVEDAVKDILEHMASTLESGDRIEIRGFGSFSLHYREPRVGRNPKTGDKVELEGKYVPHFKPGKELRERVNLGS.

This sequence belongs to the bacterial histone-like protein family. Heterodimer of an alpha and a beta chain.

Its function is as follows. This protein is one of the two subunits of integration host factor, a specific DNA-binding protein that functions in genetic recombination as well as in transcriptional and translational control. The protein is Integration host factor subunit beta of Vibrio campbellii (strain ATCC BAA-1116).